We begin with the raw amino-acid sequence, 142 residues long: Type II secretion system core protein G (142 aa).

Positions 1 to 8 are cleaved as a propeptide — leader sequence; that stretch reads MQRRQQSG. F9 carries the post-translational modification N-methylphenylalanine. A helical transmembrane segment spans residues 9–29; sequence FTLIEIMVVVVILGILAALVV. Residues 121-142 form a disordered region; that stretch reads SLGADGKEGGSDNDADIGNWDN.

The protein belongs to the GSP G family. As to quaternary structure, type II secretion system is composed of four main components: the outer membrane complex, the inner membrane complex, the cytoplasmic secretion ATPase and the periplasm-spanning pseudopilus. Forms homomultimers. Interacts with pseudopilin tip ternary complex made of XcpX, XcpU, XcpV and XcpW. Interacts with PilA. Cleaved by the prepilin peptidase. In terms of processing, methylated by prepilin peptidase at the amino group of the N-terminal phenylalanine once the leader sequence is cleaved.

It is found in the cell inner membrane. Functionally, core component of the type II secretion system required for the energy-dependent secretion of extracellular factors such as proteases and toxins from the periplasm. Pseudopilin (pilin-like) protein that polymerizes to form the pseudopilus. Further polymerization triggers pseudopilus growth. Type II pseudopilus confers increased bacterial adhesive capabilities. The polypeptide is Type II secretion system core protein G (xcpT) (Pseudomonas aeruginosa (strain ATCC 15692 / DSM 22644 / CIP 104116 / JCM 14847 / LMG 12228 / 1C / PRS 101 / PAO1)).